Consider the following 208-residue polypeptide: MAKVSLFKQDGSQAGEVTLNDSVFGIEPNESVVFDVVISQRASLRQGTHAHKNRSAVSGGGKKPWRQKGTGRARQGSTRSPQWRGGGTVFGPNPRSYAYKLPQKVRQLALKSVYSTKVADGKLIAVDTLDFTAPKTAEFAKVISALSIERKVLVVLPNEGNEFAELSARNLANVKVTTANSASVLDIVSADKLLVVQSALTQIEEVLA.

Residues 45-89 (RQGTHAHKNRSAVSGGGKKPWRQKGTGRARQGSTRSPQWRGGGTV) are disordered.

This sequence belongs to the universal ribosomal protein uL4 family. Part of the 50S ribosomal subunit.

In terms of biological role, one of the primary rRNA binding proteins, this protein initially binds near the 5'-end of the 23S rRNA. It is important during the early stages of 50S assembly. It makes multiple contacts with different domains of the 23S rRNA in the assembled 50S subunit and ribosome. Forms part of the polypeptide exit tunnel. This is Large ribosomal subunit protein uL4 from Lactococcus lactis subsp. lactis (strain IL1403) (Streptococcus lactis).